Reading from the N-terminus, the 401-residue chain is Enolase (401 aa).

Gln-154 contributes to the (2R)-2-phosphoglycerate binding site. Glu-196 serves as the catalytic Proton donor. Mg(2+) contacts are provided by Asp-232, Glu-275, and Asp-302. (2R)-2-phosphoglycerate-binding residues include Lys-327, Arg-356, Ser-357, and Lys-378. The Proton acceptor role is filled by Lys-327.

It belongs to the enolase family. It depends on Mg(2+) as a cofactor.

The protein localises to the cytoplasm. It is found in the secreted. The protein resides in the cell surface. The catalysed reaction is (2R)-2-phosphoglycerate = phosphoenolpyruvate + H2O. The protein operates within carbohydrate degradation; glycolysis; pyruvate from D-glyceraldehyde 3-phosphate: step 4/5. In terms of biological role, catalyzes the reversible conversion of 2-phosphoglycerate (2-PG) into phosphoenolpyruvate (PEP). It is essential for the degradation of carbohydrates via glycolysis. This is Enolase from Haloquadratum walsbyi (strain DSM 16790 / HBSQ001).